Consider the following 626-residue polypeptide: UvrABC system protein C (626 aa).

Residues 25–104 enclose the GIY-YIG domain; sequence TSPGVYRFSN…IKELKPRYNV (80 aa). The region spanning 218-253 is the UVR domain; that stretch reads SALLRDLSAEMQKKAKELKFEEAAALKAQIEGLKRY.

The protein belongs to the UvrC family. In terms of assembly, interacts with UvrB in an incision complex.

It localises to the cytoplasm. Its function is as follows. The UvrABC repair system catalyzes the recognition and processing of DNA lesions. UvrC both incises the 5' and 3' sides of the lesion. The N-terminal half is responsible for the 3' incision and the C-terminal half is responsible for the 5' incision. In Chlorobaculum tepidum (strain ATCC 49652 / DSM 12025 / NBRC 103806 / TLS) (Chlorobium tepidum), this protein is UvrABC system protein C.